The primary structure comprises 445 residues: Clusterin (445 aa).

The signal sequence occupies residues 1 to 22 (MMKTLLLLVGLLLTWDNGRVLG). The Nuclear localization signal motif lies at 78-81 (KKKK). Asn-86 and Asn-103 each carry an N-linked (GlcNAc...) asparagine glycan. 5 disulfide bridges follow: Cys-102/Cys-309, Cys-113/Cys-301, Cys-116/Cys-298, Cys-121/Cys-291, and Cys-129/Cys-281. Ser-133 is subject to Phosphoserine. N-linked (GlcNAc...) asparagine glycans are attached at residues Asn-145, Asn-277, Asn-287, Asn-350, and Asn-370. Ser-392 is subject to Phosphoserine. Residues 439-443 (RQKHR) carry the Nuclear localization signal motif.

The protein belongs to the clusterin family. As to quaternary structure, antiparallel disulfide-linked heterodimer of an alpha chain and a beta chain. Self-associates and forms higher oligomers. Interacts with a broad range of misfolded proteins, including APP, APOC2 and LYZ. Slightly acidic pH promotes interaction with misfolded proteins. Forms high-molecular weight oligomers upon interaction with misfolded proteins. Interacts with APOA1, LRP2, CLUAP1 and PON1. Interacts with the complement membrane attack complex. Interacts (via alpha chain) with XRCC6. Interacts with SYVN1, COMMD1, BTRC, CUL1 and with ubiquitin and SCF (SKP1-CUL1-F-box protein) E3 ubiquitin-protein ligase complexes. Interacts (via alpha chain) with BAX in stressed cells, where BAX undergoes a conformation change leading to association with the mitochondrial membrane. Does not interact with BAX in unstressed cells. Found in a complex with LTF, CLU, EPPIN and SEMG1. Interacts (immaturely glycosylated pre-secreted form) with HSPA5; this interaction promotes CLU stability and facilitates stress-induced CLU retrotranslocation from the secretory pathway to the mitochondria, thereby reducing stress-induced apoptosis by stabilizing mitochondrial membrane integrity. Interacts with BCL2L1; this interaction releases and activates BAX and promotes cell death. Interacts with TGFBR2 and ACVR1. Interacts (secreted form) with STMN3; this interaction may act as an important modulator during neuronal differentiation. Interacts with VLDLR and LRP8. In terms of processing, proteolytically cleaved on its way through the secretory system, probably within the Golgi lumen. Proteolytic cleavage is not necessary for its chaperone activity. All non-secreted forms are not proteolytically cleaved. Chaperone activity of uncleaved forms is dependent on a non-reducing environment. This proteolytic maturation is disulfide bond formation dependent. Post-translationally, polyubiquitinated, leading to proteasomal degradation. Under cellular stress, the intracellular level of cleaved form is reduced due to proteasomal degradation. Heavily N-glycosylated. About 30% of the protein mass is comprised of complex N-linked carbohydrate. Endoplasmic reticulum (ER) stress induces changes in glycosylation status and increases level of hypoglycosylated forms. Core carbohydrates are essential for chaperone activity. Non-secreted forms are hypoglycosylated or unglycosylated.

The protein resides in the secreted. The protein localises to the nucleus. It localises to the cytoplasm. It is found in the mitochondrion membrane. Its subcellular location is the cytosol. The protein resides in the microsome. The protein localises to the endoplasmic reticulum. It localises to the mitochondrion. It is found in the perinuclear region. Its subcellular location is the cytoplasmic vesicle. The protein resides in the secretory vesicle. The protein localises to the chromaffin granule. Functionally, functions as extracellular chaperone that prevents aggregation of non native proteins. Prevents stress-induced aggregation of blood plasma proteins. Inhibits formation of amyloid fibrils by APP, APOC2, B2M, CALCA, CSN3, SNCA and aggregation-prone LYZ variants (in vitro). Does not require ATP. Maintains partially unfolded proteins in a state appropriate for subsequent refolding by other chaperones, such as HSPA8/HSC70. Does not refold proteins by itself. Binding to cell surface receptors triggers internalization of the chaperone-client complex and subsequent lysosomal or proteasomal degradation. When secreted, protects cells against apoptosis and against cytolysis by complement: inhibits assembly of the complement membrane attack complex (MAC) by preventing polymerization of C9 pore component of the MAC complex. Intracellular forms interact with ubiquitin and SCF (SKP1-CUL1-F-box protein) E3 ubiquitin-protein ligase complexes and promote the ubiquitination and subsequent proteasomal degradation of target proteins. Promotes proteasomal degradation of COMMD1 and IKBKB. Modulates NF-kappa-B transcriptional activity. Following stress, promotes apoptosis. Inhibits apoptosis when associated with the mitochondrial membrane by interference with BAX-dependent release of cytochrome c into the cytoplasm. Plays a role in the regulation of cell proliferation. An intracellular form suppresses stress-induced apoptosis by stabilizing mitochondrial membrane integrity through interaction with HSPA5. Secreted form does not affect caspase or BAX-mediated intrinsic apoptosis and TNF-induced NF-kappa-B-activity. Secreted form act as an important modulator during neuronal differentiation through interaction with STMN3. Plays a role in the clearance of immune complexes that arise during cell injury. In Canis lupus familiaris (Dog), this protein is Clusterin (CLU).